The sequence spans 127 residues: Alpha-hordothionin (127 aa).

Residues 1-18 (MVCLLILGLVLEQVQVEG) form the signal peptide. Cystine bridges form between C21-C57, C22-C49, C30-C47, and C34-C43. Residues 64-127 (LALVSNSDEP…GDAGLTSLTA (64 aa)) constitute a propeptide, acidic domain.

Belongs to the plant thionin (TC 1.C.44) family. 4 C-C subfamily.

It localises to the secreted. In terms of biological role, thionins are small plant proteins which are toxic to animal cells. They seem to exert their toxic effect at the level of the cell membrane. Their precise function is not known. This is Alpha-hordothionin (THI1.1) from Hordeum vulgare (Barley).